Here is a 749-residue protein sequence, read N- to C-terminus: 5-methyltetrahydropteroyltriglutamate--homocysteine methyltransferase (749 aa).

Residues 15–18 and Lys-114 each bind 5-methyltetrahydropteroyltri-L-glutamate; that span reads RELK. Residues 425–427 and Glu-478 contribute to the L-homocysteine site; that span reads IGS. Residues 425–427 and Glu-478 each bind L-methionine; that span reads IGS. A 5-methyltetrahydropteroyltri-L-glutamate-binding site is contributed by Trp-555. Residue Asp-593 coordinates L-homocysteine. Residue Asp-593 participates in L-methionine binding. Position 599 (Glu-599) interacts with 5-methyltetrahydropteroyltri-L-glutamate. His-636, Cys-638, and Glu-660 together coordinate Zn(2+). His-689 functions as the Proton donor in the catalytic mechanism. Zn(2+) is bound at residue Cys-721.

This sequence belongs to the vitamin-B12 independent methionine synthase family. Zn(2+) serves as cofactor.

The catalysed reaction is 5-methyltetrahydropteroyltri-L-glutamate + L-homocysteine = tetrahydropteroyltri-L-glutamate + L-methionine. It functions in the pathway amino-acid biosynthesis; L-methionine biosynthesis via de novo pathway; L-methionine from L-homocysteine (MetE route): step 1/1. In terms of biological role, catalyzes the transfer of a methyl group from 5-methyltetrahydrofolate to homocysteine resulting in methionine formation. The protein is 5-methyltetrahydropteroyltriglutamate--homocysteine methyltransferase of Streptococcus pneumoniae serotype 2 (strain D39 / NCTC 7466).